The primary structure comprises 88 residues: Small ribosomal subunit protein bS20 (88 aa).

This sequence belongs to the bacterial ribosomal protein bS20 family.

Binds directly to 16S ribosomal RNA. The protein is Small ribosomal subunit protein bS20 of Clostridium acetobutylicum (strain ATCC 824 / DSM 792 / JCM 1419 / IAM 19013 / LMG 5710 / NBRC 13948 / NRRL B-527 / VKM B-1787 / 2291 / W).